Consider the following 177-residue polypeptide: Large ribosomal subunit protein uL6 (177 aa).

Positions 154 to 177 (PEPYKGKGVRYADEQVRRKEAKKK) are disordered. A compositionally biased stretch (basic and acidic residues) spans 155–171 (EPYKGKGVRYADEQVRR).

This sequence belongs to the universal ribosomal protein uL6 family. Part of the 50S ribosomal subunit.

Its function is as follows. This protein binds to the 23S rRNA, and is important in its secondary structure. It is located near the subunit interface in the base of the L7/L12 stalk, and near the tRNA binding site of the peptidyltransferase center. This Alcanivorax borkumensis (strain ATCC 700651 / DSM 11573 / NCIMB 13689 / SK2) protein is Large ribosomal subunit protein uL6.